The sequence spans 115 residues: Large ribosomal subunit protein uL22 (115 aa).

The protein belongs to the universal ribosomal protein uL22 family. As to quaternary structure, part of the 50S ribosomal subunit.

This protein binds specifically to 23S rRNA; its binding is stimulated by other ribosomal proteins, e.g. L4, L17, and L20. It is important during the early stages of 50S assembly. It makes multiple contacts with different domains of the 23S rRNA in the assembled 50S subunit and ribosome. In terms of biological role, the globular domain of the protein is located near the polypeptide exit tunnel on the outside of the subunit, while an extended beta-hairpin is found that lines the wall of the exit tunnel in the center of the 70S ribosome. This is Large ribosomal subunit protein uL22 from Enterococcus faecalis (strain ATCC 700802 / V583).